A 325-amino-acid chain; its full sequence is Glyoxylate/hydroxypyruvate reductase B (325 aa).

Active-site residues include Arg-237 and Glu-266. His-285 serves as the catalytic Proton donor.

It belongs to the D-isomer specific 2-hydroxyacid dehydrogenase family. GhrB subfamily. Homodimer.

It is found in the cytoplasm. The catalysed reaction is glycolate + NADP(+) = glyoxylate + NADPH + H(+). It catalyses the reaction (R)-glycerate + NAD(+) = 3-hydroxypyruvate + NADH + H(+). It carries out the reaction (R)-glycerate + NADP(+) = 3-hydroxypyruvate + NADPH + H(+). Functionally, catalyzes the NADPH-dependent reduction of glyoxylate and hydroxypyruvate into glycolate and glycerate, respectively. This Serratia proteamaculans (strain 568) protein is Glyoxylate/hydroxypyruvate reductase B.